The following is a 30-amino-acid chain: Hemocyanin subunit 2 (30 aa).

It belongs to the tyrosinase family. Hemocyanin subfamily. In terms of tissue distribution, hemolymph.

Its subcellular location is the secreted. The protein localises to the extracellular space. In terms of biological role, hemocyanins are copper-containing oxygen carriers occurring freely dissolved in the hemolymph of many mollusks and arthropods. The protein is Hemocyanin subunit 2 of Homarus americanus (American lobster).